Reading from the N-terminus, the 89-residue chain is Small ribosomal subunit protein uS14 (89 aa).

It belongs to the universal ribosomal protein uS14 family. Part of the 30S ribosomal subunit. Contacts proteins S3 and S10.

Binds 16S rRNA, required for the assembly of 30S particles and may also be responsible for determining the conformation of the 16S rRNA at the A site. The sequence is that of Small ribosomal subunit protein uS14 from Chlorobaculum tepidum (strain ATCC 49652 / DSM 12025 / NBRC 103806 / TLS) (Chlorobium tepidum).